A 366-amino-acid chain; its full sequence is Transcription factor IIIA (366 aa).

C2H2-type zinc fingers lie at residues 35 to 59, 65 to 89, 95 to 120, 127 to 151, 157 to 181, 184 to 210, 214 to 236, 243 to 268, and 274 to 298; these read YICSFADCGAAYNKNWKLQAHLCKH, FPCKEEGCEKGFTSLHHLTRHSLTH, FTCDSDGCDLRFTTKANMKKHFNRFH, YVCHFENCGKAFKKHNQLKVHQFSH, YECPHEGCDKRFSLPSRLKRHEKVH, YPCKKDDSCSFVGKTWTLYLKHVAECH, AVCDVCNRKFRHKDYLRDHQKTH, YLCPRDGCDRSYTTAFNLRSHIQSFH, and FVCEHAGCGKCFAMKKSLERHSVVH. Ser38 carries the post-translational modification Phosphoserine; by CK2. Residues 299–310 are compositionally biased toward basic and acidic residues; sequence DPEKRKLKEKCP. A disordered region spans residues 299–366; it reads DPEKRKLKEK…SLVLDKLTIQ (68 aa). The residue at position 336 (Ser336) is a Phosphoserine; by CK2; in vitro.

The N-terminus is blocked. As to expression, synthesized in oocytes and, in much lower levels, in somatic cells.

The protein resides in the nucleus. In terms of biological role, involved in ribosomal large subunit biogenesis. Acts both as a positive transcription factor for 5S RNA genes, and as a specific RNA binding protein that complexes with 5S RNA in oocytes to form the 7S ribonucleoprotein storage particle. May play an essential role in the developmental change in 5S RNA gene expression. Interacts with the internal control region (ICR) of approximately 50 bases within the 5S RNA genes, is required for correct transcription of these genes by RNA polymerase III. Also binds the transcribed 5S RNA's. The sequence is that of Transcription factor IIIA (gtf3a) from Xenopus laevis (African clawed frog).